A 340-amino-acid chain; its full sequence is Ketol-acid reductoisomerase (NADP(+)) (340 aa).

Residues 1-183 (MAITVYYDKD…GGGRTGIIET (183 aa)) form the KARI N-terminal Rossmann domain. NADP(+) contacts are provided by residues 26–29 (FGSQ), R49, S52, S54, and 84–87 (DEIQ). H109 is an active-site residue. G135 lines the NADP(+) pocket. The KARI C-terminal knotted domain maps to 184-329 (TFKAETETDL…RNLRAMMPWI (146 aa)). Residues D192, E196, E228, and E232 each coordinate Mg(2+). Position 253 (S253) interacts with substrate.

This sequence belongs to the ketol-acid reductoisomerase family. Requires Mg(2+) as cofactor.

It catalyses the reaction (2R)-2,3-dihydroxy-3-methylbutanoate + NADP(+) = (2S)-2-acetolactate + NADPH + H(+). It carries out the reaction (2R,3R)-2,3-dihydroxy-3-methylpentanoate + NADP(+) = (S)-2-ethyl-2-hydroxy-3-oxobutanoate + NADPH + H(+). The protein operates within amino-acid biosynthesis; L-isoleucine biosynthesis; L-isoleucine from 2-oxobutanoate: step 2/4. It participates in amino-acid biosynthesis; L-valine biosynthesis; L-valine from pyruvate: step 2/4. Functionally, involved in the biosynthesis of branched-chain amino acids (BCAA). Catalyzes an alkyl-migration followed by a ketol-acid reduction of (S)-2-acetolactate (S2AL) to yield (R)-2,3-dihydroxy-isovalerate. In the isomerase reaction, S2AL is rearranged via a Mg-dependent methyl migration to produce 3-hydroxy-3-methyl-2-ketobutyrate (HMKB). In the reductase reaction, this 2-ketoacid undergoes a metal-dependent reduction by NADPH to yield (R)-2,3-dihydroxy-isovalerate. This chain is Ketol-acid reductoisomerase (NADP(+)), found in Campylobacter jejuni (strain RM1221).